The following is a 339-amino-acid chain: MTPPPAKRQKRNEYRKANTAVADDASEIRLPQKKFYRQRAHANPFSDHQLNYPLSPAHMDWSSHYPAFVDPEPSHTNLAGTRKLLKDVEVVDIGCGFGGLLIGLAPLLPESLIVGMEIRVSVLEYVTARIQALRSQQQKLRSSAIPSESSPAAQQPQQHHQQQLQATETAADAASPSSPDATGETLSLVPGNYQNISAIRSNTMKFFPNFFARHQLSKIFICFPDPHFKARKHKARIISETLNAEYAYALRPGGLLYTITDVEEYHHWVLRHFGEEGADAGQNAGVTELFERVSDEELEKDDCVRVMKEATEEGKKVTRNKGNKYVAVFRRKADPEWPA.

The segment at 1–20 (MTPPPAKRQKRNEYRKANTA) is disordered. S-adenosyl-L-methionine-binding positions include glycine 94 and 117-118 (EI). Residues 141–186 (RSSAIPSESSPAAQQPQQHHQQQLQATETAADAASPSSPDATGETL) form a disordered region. Low complexity predominate over residues 142–181 (SSAIPSESSPAAQQPQQHHQQQLQATETAADAASPSSPDA). S-adenosyl-L-methionine contacts are provided by residues 202-203 (NT) and cysteine 222. Aspartate 225 is an active-site residue. 311–313 (TEE) contributes to the S-adenosyl-L-methionine binding site.

This sequence belongs to the class I-like SAM-binding methyltransferase superfamily. TrmB family. As to quaternary structure, forms a complex with trm82.

It localises to the nucleus. It carries out the reaction guanosine(46) in tRNA + S-adenosyl-L-methionine = N(7)-methylguanosine(46) in tRNA + S-adenosyl-L-homocysteine. It functions in the pathway tRNA modification; N(7)-methylguanine-tRNA biosynthesis. In terms of biological role, catalyzes the formation of N(7)-methylguanine at position 46 (m7G46) in tRNA. The protein is tRNA (guanine-N(7)-)-methyltransferase (trm8) of Aspergillus clavatus (strain ATCC 1007 / CBS 513.65 / DSM 816 / NCTC 3887 / NRRL 1 / QM 1276 / 107).